A 574-amino-acid polypeptide reads, in one-letter code: Glycine--tRNA ligase (574 aa).

Residues arginine 96 and glutamate 162 each contribute to the substrate site. ATP contacts are provided by residues arginine 194–glutamate 196, isoleucine 204–phenylalanine 209, glutamate 327–cysteine 328, and glycine 450–arginine 453. Phenylalanine 209–glutamate 213 is a binding site for substrate. Residue glutamate 446 to glycine 450 coordinates substrate.

The protein belongs to the class-II aminoacyl-tRNA synthetase family.

The protein resides in the cytoplasm. The catalysed reaction is tRNA(Gly) + glycine + ATP = glycyl-tRNA(Gly) + AMP + diphosphate. Its function is as follows. Catalyzes the attachment of glycine to tRNA(Gly). The protein is Glycine--tRNA ligase of Methanococcus maripaludis (strain C6 / ATCC BAA-1332).